A 906-amino-acid chain; its full sequence is Kinesin-like protein KIN-7G (906 aa).

Positions 26–344 (SVAVAVRFRP…LKFAHRAKHI (319 aa)) constitute a Kinesin motor domain. 105–112 (GVTSSGKT) serves as a coordination point for ATP. Coiled-coil stretches lie at residues 346–385 (IQAT…RTGT), 733–814 (SDEF…GRNQ), and 839–875 (GDMN…LEKE). The disordered stretch occupies residues 803–840 (RLSSELASGRNQRRGSHGPRGARRESHTKRYEPARRGD). The span at 813-823 (NQRRGSHGPRG) shows a compositional bias: basic residues. The segment covering 824-840 (ARRESHTKRYEPARRGD) has biased composition (basic and acidic residues).

It belongs to the TRAFAC class myosin-kinesin ATPase superfamily. Kinesin family. KIN-7 subfamily.

The polypeptide is Kinesin-like protein KIN-7G (Oryza sativa subsp. japonica (Rice)).